We begin with the raw amino-acid sequence, 1018 residues long: Fibronectin-binding protein A (1018 aa).

Positions 1 to 36 (MKNNLRYGIRKHKLGAASVFLGTMIVVGMGQDKEAA) are cleaved as a signal peptide. A YSIRK-G/S signaling motif motif is present at residues 7–18 (YGIRKHKLGAAS). A ligand-binding A region region spans residues 37-511 (ASEQKTTTVE…SNKANGNGKN (475 aa)). Disordered regions lie at residues 38–61 (SEQK…SETQ) and 78–195 (ATVT…ETGT). Polar residues-rich tracts occupy residues 39-61 (EQKT…SETQ) and 78-92 (ATVT…QVTT). The span at 112-126 (TVKEEVVKEEAKPQV) shows a compositional bias: basic and acidic residues. Residues 129–139 (TTQSQDNSGDQ) show a composition bias toward polar residues. The interval 194–511 (GTDVTSKVTV…SNKANGNGKN (318 aa)) is fibrinogen/elastin/tropoelastin-binding. Residues 512-872 (GPIIQNNKFE…EGQQTIEEDT (361 aa)) are fibronectin-binding. A B-1 repeat occupies 545 to 574 (EEYDSSTLDIDYHTAIDGGGGYVDGYIETI). The segment at 545-604 (EEYDSSTLDIDYHTAIDGGGGYVDGYIETIEETDSSAIDIDYHTAVDSEAGHVGGYTESS) is 2 X approximate tandem repeats. Residues 575–604 (EETDSSAIDIDYHTAVDSEAGHVGGYTESS) form a B-2 repeat. Disordered stretches follow at residues 595-622 (GHVG…NSKH), 740-813 (LGYE…DIDF), and 827-997 (EIIE…GMLF). A D-1 repeat occupies 745 to 782 (GQNSGNQSFEEDTEEDKPKYEQGGNIVDIDFDSVPQIH). Residues 745 to 878 (GQNSGNQSFE…EEDTTPPIVP (134 aa)) form a 4 X approximate tandem repeats region. Residues 783-820 (GQNKGNQSFEEDTEKDKPKYEHGGNIIDIDFDSVPHIH) form a D-2 repeat. The stretch at 821-859 (GFNKHTEIIEEDTNKDKPSYQFGGHNSVDFEEDTLPKVS) is one D-3 repeat. The segment covering 827 to 838 (EIIEEDTNKDKP) has biased composition (basic and acidic residues). The D-4; truncated repeat unit spans residues 860 to 878 (GQNEGQQTIEEDTTPPIVP). A compositionally biased stretch (pro residues) spans 875–938 (PIVPPTPPTP…PAEPGKPVPP (64 aa)). WR repeat units lie at residues 879 to 892 (PTPP…EPET), 893 to 906 (PTPP…EPET), 907 to 920 (PTPP…EPET), 921 to 934 (PTPP…EPGK), and 935 to 948 (PVPP…KPSK). Positions 879-948 (PTPPTPEVPS…AKEEPKKPSK (70 aa)) are 5 X tandem repeats, Pro-rich (WR). The short motif at 982 to 986 (LPETG) is the LPXTG sorting signal element. A Pentaglycyl murein peptidoglycan amidated threonine modification is found at Thr985. The propeptide at 986 to 1018 (GGEESTNKGMLFGGLFSILGLALLRRNKKNHKA) is removed by sortase.

The protein resides in the secreted. Its subcellular location is the cell wall. Functionally, promotes bacterial attachment to multiple substrates, such as fibronectin (Fn), fibrinogen (Fg), elastin peptides and tropoelastin. This confers to S.aureus the ability to invade endothelial cells. Promotes adherence to and aggregation of activated platelets. This chain is Fibronectin-binding protein A, found in Staphylococcus aureus (strain USA300).